We begin with the raw amino-acid sequence, 213 residues long: Heavy metal-binding protein HIP (213 aa).

Positions 80–213 constitute a C1q domain; sequence FKSHHVAFSA…MSTFTGFMLH (134 aa).

Pallium, gill and liver.

It localises to the secreted. In terms of biological role, binds heavy metals. May function as a carrier of divalent cations in plasma. The sequence is that of Heavy metal-binding protein HIP from Mytilus edulis (Blue mussel).